Consider the following 293-residue polypeptide: Pyridoxal 5'-phosphate synthase subunit PdxS (293 aa).

Asp23 is a binding site for D-ribose 5-phosphate. The active-site Schiff-base intermediate with D-ribose 5-phosphate is the Lys80. Position 152 (Gly152) interacts with D-ribose 5-phosphate. D-glyceraldehyde 3-phosphate is bound at residue Arg164. D-ribose 5-phosphate contacts are provided by residues Gly213 and 234 to 235; that span reads GS.

The protein belongs to the PdxS/SNZ family. In terms of assembly, in the presence of PdxT, forms a dodecamer of heterodimers.

It carries out the reaction aldehydo-D-ribose 5-phosphate + D-glyceraldehyde 3-phosphate + L-glutamine = pyridoxal 5'-phosphate + L-glutamate + phosphate + 3 H2O + H(+). The protein operates within cofactor biosynthesis; pyridoxal 5'-phosphate biosynthesis. In terms of biological role, catalyzes the formation of pyridoxal 5'-phosphate from ribose 5-phosphate (RBP), glyceraldehyde 3-phosphate (G3P) and ammonia. The ammonia is provided by the PdxT subunit. Can also use ribulose 5-phosphate and dihydroxyacetone phosphate as substrates, resulting from enzyme-catalyzed isomerization of RBP and G3P, respectively. This is Pyridoxal 5'-phosphate synthase subunit PdxS from Chloroflexus aggregans (strain MD-66 / DSM 9485).